The sequence spans 282 residues: Aldo-keto reductase MUL_1987 (282 aa).

Tyr-57 functions as the Proton donor in the catalytic mechanism. 6 residues coordinate NADPH: Leu-197, Ile-235, Ser-238, Thr-246, Asn-247, and Arg-273.

The protein belongs to the aldo/keto reductase family.

The polypeptide is Aldo-keto reductase MUL_1987 (Mycobacterium ulcerans (strain Agy99)).